Here is an 823-residue protein sequence, read N- to C-terminus: Degenerin-like protein asic-1 (823 aa).

At 1 to 38 (MGKNSLKRALELDVVDFAEHTSAHGIPRAYVSTGWRRY) the chain is on the cytoplasmic side. The helical transmembrane segment at 39-59 (MWLLCFLFCLSCFGHQAYLIV) threads the bilayer. Residues 60–767 (ERFNRNDIIV…FGGQLGLWMG (708 aa)) are Extracellular-facing. Intrachain disulfides connect C86/C518 and C494/C501. 5 N-linked (GlcNAc...) asparagine glycosylation sites follow: N228, N326, N347, N415, and N486. N527 and N546 each carry an N-linked (GlcNAc...) asparagine glycan. Disulfide bonds link C604-C687, C625-C683, C629-C681, and C638-C664. A GAS motif; ion selectivity filter motif is present at residues 767–769 (GVS). The helical transmembrane segment at 768–788 (VSVITIGEVACFFFEVFISLI) threads the bilayer. Residues 789–795 (SSNRTKR) are Cytoplasmic-facing.

This sequence belongs to the amiloride-sensitive sodium channel (TC 1.A.6) family. As to quaternary structure, homotrimer. Heterotrimer; with other ASIC proteins producing channel with different properties.

It is found in the cell membrane. The protein localises to the postsynaptic cell membrane. The protein resides in the cell projection. Its subcellular location is the dendrite. The catalysed reaction is Na(+)(in) = Na(+)(out). It catalyses the reaction K(+)(in) = K(+)(out). The enzyme catalyses Li(+)(in) = Li(+)(out). It carries out the reaction Ca(2+)(in) = Ca(2+)(out). Functionally, forms voltage-independent, pH-gated trimeric sodium channels that act as postsynaptic excitatory receptors in the nervous system, playing a crucial role in regulating synaptic plasticity, learning, and memory. Promotes synaptic vesicle fusion to positively regulate the release of dopamine at dopaminergic neuron synapses. Displays high selectivity for sodium ions but can also permit the permeation of other cations. The polypeptide is Degenerin-like protein asic-1 (Caenorhabditis elegans).